We begin with the raw amino-acid sequence, 256 residues long: Small ribosomal subunit protein eS1 (256 aa).

Alanine 2 is subject to N-acetylalanine; partial.

Belongs to the eukaryotic ribosomal protein eS1 family. Component of the small ribosomal subunit. Mature ribosomes consist of a small (40S) and a large (60S) subunit. The 40S subunit contains about 33 different proteins and 1 molecule of RNA (18S). The 60S subunit contains about 49 different proteins and 3 molecules of RNA (25S, 5.8S and 5S).

The protein resides in the cytoplasm. The chain is Small ribosomal subunit protein eS1 from Lachancea thermotolerans (strain ATCC 56472 / CBS 6340 / NRRL Y-8284) (Yeast).